The primary structure comprises 79 residues: Large ribosomal subunit protein bL28 (79 aa).

The protein belongs to the bacterial ribosomal protein bL28 family.

The protein is Large ribosomal subunit protein bL28 of Porphyromonas gingivalis (strain ATCC 33277 / DSM 20709 / CIP 103683 / JCM 12257 / NCTC 11834 / 2561).